A 412-amino-acid polypeptide reads, in one-letter code: Trafficking protein particle complex subunit 13 (412 aa).

The protein belongs to the TRAPPC13 family. As to quaternary structure, part of the multisubunit TRAPP (transport protein particle) complex.

This Danio rerio (Zebrafish) protein is Trafficking protein particle complex subunit 13 (trappc13).